Consider the following 391-residue polypeptide: Calcium-binding and spermatid-specific protein 1 (391 aa).

Disordered regions lie at residues 1 to 23, 90 to 110, and 152 to 221; these read MAEDGSPKIYSRPPRDNSKTPTE, PEKEITTPTETPNSKPKGSIT, and KEVV…KEVT. Positions 90–101 are enriched in low complexity; the sequence is PEKEITTPTETP. Serine 253 and serine 269 each carry phosphoserine. Residues 271 to 299 form a disordered region; it reads EKAKDNVEDPLNDEESTDGANDWMEKETA. The segment covering 278-287 has biased composition (acidic residues); that stretch reads EDPLNDEEST. Phosphoserine is present on residues serine 314, serine 347, serine 357, serine 372, and serine 376. Residues 330 to 351 form a disordered region; sequence EESHVNTTDLPENETTESVTNV.

As to expression, detected only in testis. Expressed from stages X to VIII of the seminiferous epithelial cycle. Expressed from step 13 to step 16 of spermatid development (at protein level).

It is found in the cytoplasm. It localises to the mitochondrion inner membrane. The protein resides in the cell projection. The protein localises to the cilium. Its subcellular location is the flagellum. It is found in the cytoplasmic vesicle. It localises to the secretory vesicle. The protein resides in the acrosome. Functionally, calcium-binding protein. Essential for maintaining the structural integrity of the sperm flagella. The protein is Calcium-binding and spermatid-specific protein 1 (Cabs1) of Mus musculus (Mouse).